A 181-amino-acid chain; its full sequence is Ribonuclease HII (181 aa).

Residues 1 to 181 enclose the RNase H type-2 domain; the sequence is MICGIDEVGR…SLHRKSFQLI (181 aa). Residues D6, E7, and D98 each contribute to the a divalent metal cation site.

This sequence belongs to the RNase HII family. Mn(2+) serves as cofactor. It depends on Mg(2+) as a cofactor.

The protein resides in the cytoplasm. The catalysed reaction is Endonucleolytic cleavage to 5'-phosphomonoester.. In terms of biological role, endonuclease that specifically degrades the RNA of RNA-DNA hybrids. This Borrelia duttonii (strain Ly) protein is Ribonuclease HII.